The chain runs to 217 residues: Peroxiredoxin Q, chloroplastic (217 aa).

A chloroplast-targeting transit peptide spans 1–65; that stretch reads MAAICLPVAK…PPPSYSARIS (65 aa). Residues 70–217 form the Thioredoxin domain; it reads VSKGSVPPQF…DETLKFLQSA (148 aa). The active-site Cysteine sulfenic acid (-SOH) intermediate is Cys112. A disulfide bridge connects residues Cys112 and Cys117.

This sequence belongs to the peroxiredoxin family. BCP/PrxQ subfamily. In terms of assembly, monomer. In terms of tissue distribution, expressed in the leaves, roots and stems.

It is found in the plastid. Its subcellular location is the chloroplast thylakoid lumen. The catalysed reaction is a hydroperoxide + [thioredoxin]-dithiol = an alcohol + [thioredoxin]-disulfide + H2O. Its function is as follows. Thiol-specific peroxidase that catalyzes the reduction of hydrogen peroxide and organic hydroperoxides to water and alcohols, respectively. Plays a role in cell protection against oxidative stress by detoxifying peroxides. Involved in both resistance against fungal disease and oxidative stress. This Gentiana triflora (Clustered gentian) protein is Peroxiredoxin Q, chloroplastic (AFP1).